The sequence spans 282 residues: Bifunctional protein FolD (282 aa).

NADP(+) contacts are provided by residues 164 to 166 (GAS), Ile-189, and Ile-230.

The protein belongs to the tetrahydrofolate dehydrogenase/cyclohydrolase family. In terms of assembly, homodimer.

The enzyme catalyses (6R)-5,10-methylene-5,6,7,8-tetrahydrofolate + NADP(+) = (6R)-5,10-methenyltetrahydrofolate + NADPH. It catalyses the reaction (6R)-5,10-methenyltetrahydrofolate + H2O = (6R)-10-formyltetrahydrofolate + H(+). It participates in one-carbon metabolism; tetrahydrofolate interconversion. Its function is as follows. Catalyzes the oxidation of 5,10-methylenetetrahydrofolate to 5,10-methenyltetrahydrofolate and then the hydrolysis of 5,10-methenyltetrahydrofolate to 10-formyltetrahydrofolate. The polypeptide is Bifunctional protein FolD (Campylobacter jejuni subsp. jejuni serotype O:2 (strain ATCC 700819 / NCTC 11168)).